A 648-amino-acid chain; its full sequence is Serine/threonine-protein kinase DCLK3 (648 aa).

2 disordered regions span residues 86-127 and 150-345; these read DDRA…HLGV and QSLE…PRPM. Basic and acidic residues-rich tracts occupy residues 98 to 127, 213 to 234, 255 to 266, 277 to 303, and 312 to 338; these read GKWE…HLGV, ELRR…DQES, EGLREVKKDTRP, LREH…EKKP, and TLRD…ERPS. The 258-residue stretch at 356–613 folds into the Protein kinase domain; sequence YETGRVIGDG…AHQVLQHPWI (258 aa). Residues 362-370 and Lys385 each bind ATP; that span reads IGDGNFAVV. Asp477 functions as the Proton acceptor in the catalytic mechanism. Residues 628–648 are disordered; it reads VSPSSEGHFRSQHKRVVEQVS.

This sequence belongs to the protein kinase superfamily. CAMK Ser/Thr protein kinase family. CaMK subfamily.

The protein localises to the cytoplasm. It localises to the nucleus. It carries out the reaction L-seryl-[protein] + ATP = O-phospho-L-seryl-[protein] + ADP + H(+). It catalyses the reaction L-threonyl-[protein] + ATP = O-phospho-L-threonyl-[protein] + ADP + H(+). This is Serine/threonine-protein kinase DCLK3 (DCLK3) from Homo sapiens (Human).